A 318-amino-acid polypeptide reads, in one-letter code: Ankyrin repeat and SOCS box protein 7 (318 aa).

7 ANK repeats span residues 13–42 (QEEL…SPNG), 46–75 (NGWT…DPTV), 80–109 (GGFT…RSDI), 116–145 (DGWT…EVDP), 149–178 (KGTT…NIDI), 180–208 (NGFL…DTDL), and 213–242 (DGQT…DTNT). Residues 265–318 (LDFLQEVTRQPRNLQDLCRIKIRQCIGLQNLKLLDELPIAKVMKDYLKHKFDDI) form the SOCS box domain.

The protein belongs to the ankyrin SOCS box (ASB) family. In terms of assembly, interacts with CUL5. Interacts with RNF7. Interacts with PSRC1.

Its pathway is protein modification; protein ubiquitination. Its function is as follows. Probable substrate-recognition component of a SCF-like ECS (Elongin-Cullin-SOCS-box protein) E3 ubiquitin-protein ligase complex which mediates the ubiquitination and subsequent proteasomal degradation of target proteins. Plays a role in spindle dynamics and genome integrity by targeting the mitotic progression protein PSRC1 for proteasomal degradation in a cell cycle-dependent manner. Also participates in meiosis by mediating the proper attachment between kinetochores and microtubules. In Macaca fascicularis (Crab-eating macaque), this protein is Ankyrin repeat and SOCS box protein 7 (ASB7).